Here is a 361-residue protein sequence, read N- to C-terminus: tRNA-specific 2-thiouridylase MnmA (361 aa).

ATP is bound by residues 8-15 (GMSGGVDS) and methionine 34. The interval 94–96 (NPD) is interaction with target base in tRNA. Cysteine 99 serves as the catalytic Nucleophile. The cysteines at positions 99 and 195 are disulfide-linked. Glycine 123 contacts ATP. Residues 145–147 (KDQ) form an interaction with tRNA region. Cysteine 195 functions as the Cysteine persulfide intermediate in the catalytic mechanism. Positions 307–308 (RY) are interaction with tRNA.

Belongs to the MnmA/TRMU family.

Its subcellular location is the cytoplasm. It carries out the reaction S-sulfanyl-L-cysteinyl-[protein] + uridine(34) in tRNA + AH2 + ATP = 2-thiouridine(34) in tRNA + L-cysteinyl-[protein] + A + AMP + diphosphate + H(+). Functionally, catalyzes the 2-thiolation of uridine at the wobble position (U34) of tRNA, leading to the formation of s(2)U34. In Legionella pneumophila (strain Lens), this protein is tRNA-specific 2-thiouridylase MnmA.